A 360-amino-acid polypeptide reads, in one-letter code: Peptide chain release factor 1 (360 aa).

The residue at position 237 (Q237) is an N5-methylglutamine.

It belongs to the prokaryotic/mitochondrial release factor family. Post-translationally, methylated by PrmC. Methylation increases the termination efficiency of RF1.

The protein localises to the cytoplasm. Peptide chain release factor 1 directs the termination of translation in response to the peptide chain termination codons UAG and UAA. The protein is Peptide chain release factor 1 of Pseudomonas aeruginosa (strain LESB58).